Here is a 259-residue protein sequence, read N- to C-terminus: Protein-L-isoaspartate O-methyltransferase 1 (259 aa).

Ser-109 is an active-site residue.

Belongs to the methyltransferase superfamily. L-isoaspartyl/D-aspartyl protein methyltransferase family.

It is found in the cytoplasm. The enzyme catalyses [protein]-L-isoaspartate + S-adenosyl-L-methionine = [protein]-L-isoaspartate alpha-methyl ester + S-adenosyl-L-homocysteine. Catalyzes the methyl esterification of L-isoaspartyl residues in peptides and proteins that result from spontaneous decomposition of normal L-aspartyl and L-asparaginyl residues. It plays a role in the repair and/or degradation of damaged proteins. The polypeptide is Protein-L-isoaspartate O-methyltransferase 1 (Cupriavidus necator (strain ATCC 17699 / DSM 428 / KCTC 22496 / NCIMB 10442 / H16 / Stanier 337) (Ralstonia eutropha)).